Consider the following 428-residue polypeptide: Enolase (428 aa).

Position 167 (Q167) interacts with (2R)-2-phosphoglycerate. E209 functions as the Proton donor in the catalytic mechanism. D246, E288, and D315 together coordinate Mg(2+). 4 residues coordinate (2R)-2-phosphoglycerate: K340, R369, S370, and K391. Residue K340 is the Proton acceptor of the active site.

Belongs to the enolase family. In terms of assembly, component of the RNA degradosome, a multiprotein complex involved in RNA processing and mRNA degradation. It depends on Mg(2+) as a cofactor.

The protein localises to the cytoplasm. The protein resides in the secreted. Its subcellular location is the cell surface. The enzyme catalyses (2R)-2-phosphoglycerate = phosphoenolpyruvate + H2O. Its pathway is carbohydrate degradation; glycolysis; pyruvate from D-glyceraldehyde 3-phosphate: step 4/5. Its function is as follows. Catalyzes the reversible conversion of 2-phosphoglycerate (2-PG) into phosphoenolpyruvate (PEP). It is essential for the degradation of carbohydrates via glycolysis. This is Enolase from Pseudomonas savastanoi pv. phaseolicola (strain 1448A / Race 6) (Pseudomonas syringae pv. phaseolicola (strain 1448A / Race 6)).